A 177-amino-acid chain; its full sequence is ATP synthase subunit delta (177 aa).

This sequence belongs to the ATPase delta chain family. As to quaternary structure, F-type ATPases have 2 components, F(1) - the catalytic core - and F(0) - the membrane proton channel. F(1) has five subunits: alpha(3), beta(3), gamma(1), delta(1), epsilon(1). F(0) has three main subunits: a(1), b(2) and c(10-14). The alpha and beta chains form an alternating ring which encloses part of the gamma chain. F(1) is attached to F(0) by a central stalk formed by the gamma and epsilon chains, while a peripheral stalk is formed by the delta and b chains.

It is found in the cell inner membrane. Functionally, f(1)F(0) ATP synthase produces ATP from ADP in the presence of a proton or sodium gradient. F-type ATPases consist of two structural domains, F(1) containing the extramembraneous catalytic core and F(0) containing the membrane proton channel, linked together by a central stalk and a peripheral stalk. During catalysis, ATP synthesis in the catalytic domain of F(1) is coupled via a rotary mechanism of the central stalk subunits to proton translocation. In terms of biological role, this protein is part of the stalk that links CF(0) to CF(1). It either transmits conformational changes from CF(0) to CF(1) or is implicated in proton conduction. The polypeptide is ATP synthase subunit delta (Flavobacterium psychrophilum (strain ATCC 49511 / DSM 21280 / CIP 103535 / JIP02/86)).